The chain runs to 69 residues: MSCFSFLVYFLLFIVTKMSQSPLSQSSHEFTVVSPYLSCFGIEECLFYLYFKLYDLCVILLCTWFDLSE.

An N-terminal signal peptide occupies residues 1–19 (MSCFSFLVYFLLFIVTKMS). Cysteines 45 and 57 form a disulfide.

This sequence belongs to the DEFL family.

It localises to the secreted. The polypeptide is Putative defensin-like protein 312 (Arabidopsis thaliana (Mouse-ear cress)).